A 997-amino-acid polypeptide reads, in one-letter code: Pro-apoptotic serine protease NMA111 (997 aa).

The segment at 1–43 (MTISLSNIKKRDHSKISDGTSGESSLVKRKQLESATGDQEEEY) is disordered. Residues 83–273 (VVSIHFSQVA…LPLDRILRAL (191 aa)) are serine protease. Active-site charge relay system residues include histidine 121, aspartate 152, and serine 235. PDZ domains lie at 300-378 (RRLG…QRGG) and 779-854 (EEWI…VRDG).

Belongs to the peptidase S1C family. As to quaternary structure, interacts with BIR1.

It localises to the nucleus. Functionally, nuclear serine protease which mediates apoptosis through proteolysis of the apoptotic inhibitor BIR1. This chain is Pro-apoptotic serine protease NMA111 (NMA111), found in Saccharomyces cerevisiae (strain YJM789) (Baker's yeast).